The following is a 36-amino-acid chain: Conotoxin Bu21 (36 aa).

The propeptide occupies 1 to 21 (DGANAEATDNKPGVFERDEKK). 2 cysteine pairs are disulfide-bonded: cysteine 22–cysteine 28 and cysteine 23–cysteine 34.

It belongs to the conotoxin A superfamily. Expressed by the venom duct.

It is found in the secreted. In Conus bullatus (Bubble cone), this protein is Conotoxin Bu21.